A 176-amino-acid chain; its full sequence is Probable DNA-directed RNA polymerase subunit delta (176 aa).

The region spanning 14 to 81 is the HTH HARE-type domain; sequence CSMIEVVHSV…GENRWGLRSW (68 aa). Residues 90–176 form a disordered region; it reads EILPQPKPKK…ETEEEEEEEL (87 aa). Positions 106 to 176 are enriched in acidic residues; the sequence is DGFDDYIEED…ETEEEEEEEL (71 aa).

The protein belongs to the RpoE family. As to quaternary structure, RNAP is composed of a core of 2 alpha, a beta and a beta' subunits. The core is associated with a delta subunit and one of several sigma factors.

Functionally, participates in both the initiation and recycling phases of transcription. In the presence of the delta subunit, RNAP displays an increased specificity of transcription, a decreased affinity for nucleic acids, and an increased efficiency of RNA synthesis because of enhanced recycling. In Bacillus thuringiensis subsp. konkukian (strain 97-27), this protein is Probable DNA-directed RNA polymerase subunit delta.